The primary structure comprises 282 residues: Transcription factor MYB20 (282 aa).

HTH myb-type domains follow at residues 9 to 61 and 62 to 116; these read KVGL…TNYL and RPDL…KKKL. DNA-binding regions (H-T-H motif) lie at residues 37-61 and 89-112; these read WRAVPKLSGLLRCGKSCRLRWTNYL and WSKIASHLPGRTDNEIKNHWNTHI.

In terms of tissue distribution, expressed in chalaza of mature seeds, cotyledons, rosette leaves, cauline leaves, veins of stems, mature siliques, sepals and styles. Expressed at low levels in roots.

It is found in the nucleus. In terms of biological role, transcription factor that acts as a positive regulator of abscisic acid (ABA) signaling in response to salt stress. Acts as a negative regulator ABI1, ABI2 and PP2CA, which are protein phosphatases 2C acting as negative regulator of ABA signaling. Binds to the DNA specific sequence and core element 5'-ACGT-3' found in the promoters of ABI1 and PP2CA to negatively regulate their expression during ABA-dependent salt stress response. The chain is Transcription factor MYB20 from Arabidopsis thaliana (Mouse-ear cress).